The following is a 354-amino-acid chain: MRSPGIVLLLLLLLLLPPGAAPCPADLCPAPPRVNVSLDAAPAARWLPVLRLFDPGLLRAAVARIVGDRVPKWRDVIGKLVAEMESFLPQPYTKEIRGISDFLNLSLADGFIVNLAYEASAFCTSVVAQDSRGHIYHGRNLDYPFGDLLRKMTVDVQFLKNGQIAFTGTTFIGYVGLWTGQSPYKFTVSGDERDKGWWWENMIAALFQGHSPVSWLIRTTLSESEDFEASVYKLAKTPLIADVYYIVGGTAPGEGVVVTRNRGGPADIWPLDPLNGAWFRVETNYDHWKPVPKSDDRRTPAIKALNATGQANLSLEALFQVLSVVPVCNKITVYTTVMSAATPDKYMTRIRNLS.

Positions 1–22 (MRSPGIVLLLLLLLLLPPGAAP) are cleaved as a signal peptide. N-linked (GlcNAc...) asparagine glycans are attached at residues asparagine 35 and asparagine 104. The active-site Nucleophile is the cysteine 123. N-linked (GlcNAc...) asparagine glycosylation is found at asparagine 306, asparagine 312, and asparagine 352.

The protein belongs to the acid ceramidase family. As to quaternary structure, heterodimer of an alpha and a beta subunit, produced by autocatalytic cleavage. Post-translationally, N-glycosylated. Tunicamycin treatment causes a reduction in specific activity against N-palmitoylethanolamine. Autoproteolytic cleavage at pH 4.5 gives rise to the alpha and beta subunit. Cleavage gives rise to a conformation change that activates the enzyme. The same catalytic Cys residue mediates the autoproteolytic cleavage and subsequent hydrolysis of lipid substrates.

It is found in the lysosome. The protein resides in the membrane. It carries out the reaction N-hexadecanoylethanolamine + H2O = ethanolamine + hexadecanoate. It catalyses the reaction an N-(long-chain fatty acyl)ethanolamine + H2O = a long-chain fatty acid + ethanolamine. The catalysed reaction is N-dodecanoylethanolamine + H2O = dodecanoate + ethanolamine. The enzyme catalyses N-tetradecanoylethanolamine + H2O = tetradecanoate + ethanolamine. It carries out the reaction an N-acylsphing-4-enine + H2O = sphing-4-enine + a fatty acid. It catalyses the reaction N-hexadecanoylsphing-4-enine + H2O = sphing-4-enine + hexadecanoate. The catalysed reaction is N-dodecanoylsphing-4-enine + H2O = dodecanoate + sphing-4-enine. Its pathway is lipid metabolism; fatty acid metabolism. In terms of biological role, degrades bioactive fatty acid amides to their corresponding acids, with the following preference: N-palmitoylethanolamine &gt; N-myristoylethanolamine &gt; N-stearoylethanolamine &gt; N-oleoylethanolamine &gt; N-linoleoylethanolamine &gt; N-arachidonoylethanolamine. In Cavia porcellus (Guinea pig), this protein is N-acylethanolamine-hydrolyzing acid amidase.